A 74-amino-acid polypeptide reads, in one-letter code: Omega-conotoxin-like protein 1 (74 aa).

The signal sequence occupies residues 1-20 (MSKFILLVCILLLTTNIVSA). 3 disulfides stabilise this stretch: cysteine 24–cysteine 38, cysteine 31–cysteine 43, and cysteine 37–cysteine 50.

In terms of tissue distribution, highly expressed in brain. Is also found in hemolymph.

Its function is as follows. The impact of this protein on the neuronal activity of the honeybee brain is not known. It does not affect apparent movement or hatching of blowfly larvae. However, when injected into fish, it induces a strong reversible paralytic effect. In addition, the presence of this small peptide in the hemolymph of adult drones together with its induction after bacterial infection suggests that this peptide exhibits antibacterial activity. This peptide may act by inhibiting ion channels. This chain is Omega-conotoxin-like protein 1, found in Apis mellifera (Honeybee).